Here is a 38-residue protein sequence, read N- to C-terminus: Phospholipase A2 1 (38 aa).

Ca(2+)-binding residues include tyrosine 28, glycine 30, and glycine 32.

Belongs to the phospholipase A2 family. Group I subfamily. Ca(2+) is required as a cofactor. As to expression, expressed by the venom gland.

Its subcellular location is the secreted. It carries out the reaction a 1,2-diacyl-sn-glycero-3-phosphocholine + H2O = a 1-acyl-sn-glycero-3-phosphocholine + a fatty acid + H(+). Its function is as follows. Snake venom phospholipase A2 (PLA2) that inhibits neuromuscular transmission by blocking acetylcholine release from the nerve termini. PLA2 catalyzes the calcium-dependent hydrolysis of the 2-acyl groups in 3-sn-phosphoglycerides. This is Phospholipase A2 1 from Calliophis bivirgatus (Blue Malaysian coral snake).